A 257-amino-acid polypeptide reads, in one-letter code: Exosome complex component Rrp4 (257 aa).

The region spanning 65–137 (GDNVLGKIVD…EVNQIDLTTK (73 aa)) is the S1 motif domain. Residues 147-206 (RGGQLVTITPSKVPRLIGKGGSMINMIKTLTGTRIIVGQNGWVWVSGKNDELERLAIEAI) enclose the KH domain.

It belongs to the RRP4 family. In terms of assembly, component of the archaeal exosome complex. Forms a trimer of Rrp4 and/or Csl4 subunits. The trimer associates with a hexameric ring-like arrangement composed of 3 Rrp41-Rrp42 heterodimers.

The protein localises to the cytoplasm. In terms of biological role, non-catalytic component of the exosome, which is a complex involved in RNA degradation. Increases the RNA binding and the efficiency of RNA degradation. Confers strong poly(A) specificity to the exosome. The sequence is that of Exosome complex component Rrp4 from Thermococcus kodakarensis (strain ATCC BAA-918 / JCM 12380 / KOD1) (Pyrococcus kodakaraensis (strain KOD1)).